Here is a 122-residue protein sequence, read N- to C-terminus: Ribonuclease P protein component (122 aa).

Belongs to the RnpA family. In terms of assembly, consists of a catalytic RNA component (M1 or rnpB) and a protein subunit.

It catalyses the reaction Endonucleolytic cleavage of RNA, removing 5'-extranucleotides from tRNA precursor.. Its function is as follows. RNaseP catalyzes the removal of the 5'-leader sequence from pre-tRNA to produce the mature 5'-terminus. It can also cleave other RNA substrates such as 4.5S RNA. The protein component plays an auxiliary but essential role in vivo by binding to the 5'-leader sequence and broadening the substrate specificity of the ribozyme. The polypeptide is Ribonuclease P protein component (Halorhodospira halophila (strain DSM 244 / SL1) (Ectothiorhodospira halophila (strain DSM 244 / SL1))).